The following is a 168-amino-acid chain: Photosystem I assembly protein Ycf3 (168 aa).

TPR repeat units follow at residues 35–68 (AFTY…EIDP), 72–105 (SYIL…NPFL), and 120–153 (GEEA…TPGN).

Belongs to the Ycf3 family.

The protein resides in the plastid. Its subcellular location is the chloroplast thylakoid membrane. Essential for the assembly of the photosystem I (PSI) complex. May act as a chaperone-like factor to guide the assembly of the PSI subunits. In Nuphar advena (Common spatterdock), this protein is Photosystem I assembly protein Ycf3.